The primary structure comprises 248 residues: Triosephosphate isomerase (248 aa).

9-11 contributes to the substrate binding site; the sequence is NWK. His-101 functions as the Electrophile in the catalytic mechanism. The active-site Proton acceptor is the Glu-170. Substrate is bound by residues Gly-176, Ser-208, and 229–230; that span reads GG.

It belongs to the triosephosphate isomerase family. In terms of assembly, homodimer.

The protein localises to the cytoplasm. It catalyses the reaction D-glyceraldehyde 3-phosphate = dihydroxyacetone phosphate. It participates in carbohydrate biosynthesis; gluconeogenesis. Its pathway is carbohydrate degradation; glycolysis; D-glyceraldehyde 3-phosphate from glycerone phosphate: step 1/1. Its function is as follows. Involved in the gluconeogenesis. Catalyzes stereospecifically the conversion of dihydroxyacetone phosphate (DHAP) to D-glyceraldehyde-3-phosphate (G3P). The sequence is that of Triosephosphate isomerase from Mycoplasmopsis pulmonis (strain UAB CTIP) (Mycoplasma pulmonis).